The chain runs to 397 residues: Probable peptidoglycan glycosyltransferase FtsW (397 aa).

Residues 1-26 lie on the Cytoplasmic side of the membrane; that stretch reads MSPRNSALERFRQHQKIPEKRWQRLA. Residues 27–47 form a helical membrane-spanning segment; the sequence is FPDVGLLLCWLALIVIGMVMV. At 48–69 the chain is on the periplasmic side; sequence TSSSLSEAHVERLSTHHFAIRQ. The chain crosses the membrane as a helical span at residues 70 to 90; the sequence is GIFYVGSSIFAYIAFMLGTNF. At 91–96 the chain is on the cytoplasmic side; it reads YREKAK. The chain crosses the membrane as a helical span at residues 97–117; that stretch reads FILGLAFLGLLLVYAPGIGVV. The Periplasmic portion of the chain corresponds to 118 to 126; the sequence is VNGSRRWLN. Residues 127–147 traverse the membrane as a helical segment; sequence LGVINLQVGEFAKLAVFIFTA. Over 148-159 the chain is Cytoplasmic; sequence AYLQHHTQRLDH. The chain crosses the membrane as a helical span at residues 160 to 180; it reads SWQPIIGLLAVTACFALMFYL. At 181-185 the chain is on the periplasmic side; sequence QPDFG. Residues 186-206 form a helical membrane-spanning segment; the sequence is TMVVIVATVLGMLFLSGVSIW. Position 207 (Arg-207) is a topological domain, cytoplasmic. Residues 208–228 form a helical membrane-spanning segment; the sequence is LLLLGVLIAPAMVWVLISESY. The Periplasmic segment spans residues 229-294; the sequence is RLRRLTTFIN…IFSIIAEETG (66 aa). A helical membrane pass occupies residues 295–315; the sequence is LVGALIVMAILMILVWRAFAI. Topologically, residues 316–328 are cytoplasmic; that stretch reads GYLADRMRKRFSS. Residues 329-349 traverse the membrane as a helical segment; that stretch reads LLAYGIGLWLGLQSLINIGVT. Topologically, residues 350–359 are periplasmic; the sequence is TGALPTKGLT. Residues 360 to 380 traverse the membrane as a helical segment; it reads LPLISYGGSSILMTSIALAIL. Topologically, residues 381–397 are cytoplasmic; it reads ARIDAESRFIARLEGKI.

This sequence belongs to the SEDS family. FtsW subfamily.

The protein localises to the cell inner membrane. The enzyme catalyses [GlcNAc-(1-&gt;4)-Mur2Ac(oyl-L-Ala-gamma-D-Glu-L-Lys-D-Ala-D-Ala)](n)-di-trans,octa-cis-undecaprenyl diphosphate + beta-D-GlcNAc-(1-&gt;4)-Mur2Ac(oyl-L-Ala-gamma-D-Glu-L-Lys-D-Ala-D-Ala)-di-trans,octa-cis-undecaprenyl diphosphate = [GlcNAc-(1-&gt;4)-Mur2Ac(oyl-L-Ala-gamma-D-Glu-L-Lys-D-Ala-D-Ala)](n+1)-di-trans,octa-cis-undecaprenyl diphosphate + di-trans,octa-cis-undecaprenyl diphosphate + H(+). The protein operates within cell wall biogenesis; peptidoglycan biosynthesis. Its function is as follows. Peptidoglycan polymerase that is essential for cell division. The polypeptide is Probable peptidoglycan glycosyltransferase FtsW (Dichelobacter nodosus (strain VCS1703A)).